Here is a 465-residue protein sequence, read N- to C-terminus: Trigger factor (465 aa).

Residues 164–245 form the PPIase FKBP-type domain; that stretch reads GDFVSIDLSA…VQSVKERELP (82 aa). Residues 430 to 465 form a disordered region; the sequence is GNTVDTAEMFGEPAAEPEQADAAQAGDAEKAAADSE. A compositionally biased stretch (low complexity) spans 440 to 455; that stretch reads GEPAAEPEQADAAQAG. The span at 456–465 shows a compositional bias: basic and acidic residues; the sequence is DAEKAAADSE.

This sequence belongs to the FKBP-type PPIase family. Tig subfamily.

The protein resides in the cytoplasm. It catalyses the reaction [protein]-peptidylproline (omega=180) = [protein]-peptidylproline (omega=0). Functionally, involved in protein export. Acts as a chaperone by maintaining the newly synthesized protein in an open conformation. Functions as a peptidyl-prolyl cis-trans isomerase. The polypeptide is Trigger factor (Nocardia farcinica (strain IFM 10152)).